The primary structure comprises 187 residues: Calcium and integrin-binding family member 2 (187 aa).

3 EF-hand domains span residues Lys-66 to Met-101, Pro-103 to Glu-138, and Glu-144 to Phe-179. Ca(2+) is bound by residues Asp-157, Asp-159, Asp-161, Lys-163, and Asp-168.

As to quaternary structure, monomer. Homodimer. In terms of tissue distribution, enriched in central and striolar hair cells.

The protein localises to the cytoplasm. The protein resides in the cell projection. Its subcellular location is the stereocilium. It is found in the photoreceptor inner segment. It localises to the cilium. The protein localises to the photoreceptor outer segment. The protein resides in the cell membrane. Its subcellular location is the sarcolemma. Its function is as follows. Calcium- and integrin-binding protein. Plays a role in intracellular calcium homeostasis. Critical for proper photoreceptor cell maintenance and function. Essential for development, maintenance and function of mechanosensory hair cells. The sequence is that of Calcium and integrin-binding family member 2 from Danio rerio (Zebrafish).